The sequence spans 396 residues: Protein NDRG1-B (396 aa).

Positions 326–396 are disordered; that stretch reads RSRTGSAASS…NTPKSMEVSC (71 aa). The segment covering 327–340 has biased composition (low complexity); it reads SRTGSAASSSSQDG. 4 consecutive repeat copies span residues 340-349, 350-359, 360-369, and 370-379. The 4 X 10 AA tandem repeats of G-[NS]-R-S-R-[AS]-[HQ]-T-[DGN]-[DET] stretch occupies residues 340–379; it reads GNRSRSHTNEGSRSRSQTGDGNRSRAHTGDGNRSRSHTDT. A compositionally biased stretch (basic and acidic residues) spans 366–377; the sequence is HTGDGNRSRSHT. Polar residues predominate over residues 378-390; the sequence is DTNNVNSDHNTPK.

The protein belongs to the NDRG family.

Functionally, may be involved in pronephros development, after specification of the pronephros. The polypeptide is Protein NDRG1-B (ndrg1-b) (Xenopus laevis (African clawed frog)).